Consider the following 635-residue polypeptide: Replication factor C small subunit (635 aa).

Residue 51-58 participates in ATP binding; the sequence is GPPGTGKT.

Belongs to the activator 1 small subunits family. RfcS subfamily. In terms of assembly, heteromultimer composed of small subunits (RfcS) and large subunits (RfcL). In terms of processing, this protein undergoes a protein self splicing that involves a post-translational excision of the intervening region (intein) followed by peptide ligation.

Its function is as follows. Part of the RFC clamp loader complex which loads the PCNA sliding clamp onto DNA. The protein is Replication factor C small subunit (rfcS) of Methanopyrus kandleri (strain AV19 / DSM 6324 / JCM 9639 / NBRC 100938).